A 32-amino-acid polypeptide reads, in one-letter code: Secreted protein F2 (32 aa).

The protein localises to the secreted. This Globisporangium hypogynum (Pythium hypogynum) protein is Secreted protein F2.